The primary structure comprises 880 residues: Alanine--tRNA ligase (880 aa).

Residues His568, His572, Cys670, and His674 each contribute to the Zn(2+) site.

It belongs to the class-II aminoacyl-tRNA synthetase family. The cofactor is Zn(2+).

The protein resides in the cytoplasm. The catalysed reaction is tRNA(Ala) + L-alanine + ATP = L-alanyl-tRNA(Ala) + AMP + diphosphate. In terms of biological role, catalyzes the attachment of alanine to tRNA(Ala) in a two-step reaction: alanine is first activated by ATP to form Ala-AMP and then transferred to the acceptor end of tRNA(Ala). Also edits incorrectly charged Ser-tRNA(Ala) and Gly-tRNA(Ala) via its editing domain. The sequence is that of Alanine--tRNA ligase from Enterococcus faecalis (strain ATCC 700802 / V583).